The primary structure comprises 332 residues: Biotin synthase (332 aa).

The Radical SAM core domain maps to 47-273; sequence YYGNKVKLNM…MNPTKEIRIA (227 aa). [4Fe-4S] cluster contacts are provided by C65, C69, and C72. Residues C109, C141, C201, and R271 each coordinate [2Fe-2S] cluster.

This sequence belongs to the radical SAM superfamily. Biotin synthase family. As to quaternary structure, homodimer. [4Fe-4S] cluster serves as cofactor. Requires [2Fe-2S] cluster as cofactor.

The catalysed reaction is (4R,5S)-dethiobiotin + (sulfur carrier)-SH + 2 reduced [2Fe-2S]-[ferredoxin] + 2 S-adenosyl-L-methionine = (sulfur carrier)-H + biotin + 2 5'-deoxyadenosine + 2 L-methionine + 2 oxidized [2Fe-2S]-[ferredoxin]. The protein operates within cofactor biosynthesis; biotin biosynthesis; biotin from 7,8-diaminononanoate: step 2/2. Catalyzes the conversion of dethiobiotin (DTB) to biotin by the insertion of a sulfur atom into dethiobiotin via a radical-based mechanism. The protein is Biotin synthase of Geobacillus thermodenitrificans (strain NG80-2).